A 256-amino-acid chain; its full sequence is DNA repair protein RecO (256 aa).

This sequence belongs to the RecO family.

Its function is as follows. Involved in DNA repair and RecF pathway recombination. This is DNA repair protein RecO from Streptococcus equi subsp. zooepidemicus (strain MGCS10565).